Here is a 191-residue protein sequence, read N- to C-terminus: Uridylate kinase (191 aa).

G12–T17 is an ATP binding site. The NMP stretch occupies residues S33 to V63. A ribonucleoside 5'-phosphate-binding positions include R39, K61 to V63, G91 to R94, and Q98. An LID region spans residues H128–D138. Position 129 (R129) interacts with ATP. Positions 135 and 146 each coordinate a ribonucleoside 5'-phosphate. Residue Q174 participates in ATP binding.

Belongs to the adenylate kinase family. UMP-CMP kinase subfamily. In terms of assembly, monomer. Mg(2+) serves as cofactor.

Its subcellular location is the cytoplasm. The protein localises to the nucleus. It catalyses the reaction UMP + ATP = UDP + ADP. Functionally, catalyzes the phosphorylation of pyrimidine nucleoside monophosphates at the expense of ATP. Plays an important role in de novo pyrimidine nucleotide biosynthesis. Has preference for UMP and dUMP as phosphate acceptors, but can also use CMP, dCMP and AMP. The protein is Uridylate kinase of Schizosaccharomyces pombe (strain 972 / ATCC 24843) (Fission yeast).